A 75-amino-acid polypeptide reads, in one-letter code: MGSLQLILVLFVLLSDVPPVRSGVNMYIRQIYDTCWKLKGHCRNVCGKKEIFHIFCGTQFLCCIERKEMPVLFVK.

Residues 1 to 22 form the signal peptide; that stretch reads MGSLQLILVLFVLLSDVPPVRS. Intrachain disulfides connect cysteine 35/cysteine 62, cysteine 42/cysteine 56, and cysteine 46/cysteine 63.

Belongs to the beta-defensin family.

The protein localises to the secreted. Functionally, has antibacterial activity. In Rattus norvegicus (Rat), this protein is Beta-defensin 30 (Defb30).